We begin with the raw amino-acid sequence, 254 residues long: Cobalt transport protein CbiM (254 aa).

A signal peptide spans 1-31 (MKTILRPFTLLSRSIFLALFVLFLWSPDAHA). Helical transmembrane passes span 37–57 (GFLP…FLVV), 74–94 (LLLA…IPSV), 106–126 (LGAV…VLLF), 128–148 (ALLL…SMAI), 169–189 (WLAV…VTSL), and 212–232 (IFAL…VMVF).

It belongs to the CbiM family. Forms an energy-coupling factor (ECF) transporter complex composed of an ATP-binding protein (A component, CbiO), a transmembrane protein (T component, CbiQ) and 2 possible substrate-capture proteins (S components, CbiM and CbiN) of unknown stoichimetry.

It is found in the cell inner membrane. The protein operates within cofactor biosynthesis; adenosylcobalamin biosynthesis. Functionally, part of the energy-coupling factor (ECF) transporter complex CbiMNOQ involved in cobalt import. This Chlorobium limicola (strain DSM 245 / NBRC 103803 / 6330) protein is Cobalt transport protein CbiM.